The primary structure comprises 188 residues: Probable RNA-binding protein 18 (188 aa).

The 82-residue stretch at 23–104 folds into the RRM domain; that stretch reads HRLWIGNIDP…KKLVVRWAHA (82 aa). The disordered stretch occupies residues 151 to 188; the sequence is EENPDDYSGPSAYTYNKPPDKREKRSQPYHKHFRKHRR. The segment covering 177–188 has biased composition (basic residues); that stretch reads QPYHKHFRKHRR.

This is Probable RNA-binding protein 18 (rbm18) from Danio rerio (Zebrafish).